The following is a 137-amino-acid chain: Large ribosomal subunit protein uL16 (137 aa).

It belongs to the universal ribosomal protein uL16 family. As to quaternary structure, part of the 50S ribosomal subunit.

Its function is as follows. Binds 23S rRNA and is also seen to make contacts with the A and possibly P site tRNAs. This Cellvibrio japonicus (strain Ueda107) (Pseudomonas fluorescens subsp. cellulosa) protein is Large ribosomal subunit protein uL16.